Here is a 334-residue protein sequence, read N- to C-terminus: Ornithine carbamoyltransferase, catabolic (334 aa).

Residues 57–60 (STRT), Gln-84, Arg-108, and 135–138 (HPTQ) each bind carbamoyl phosphate. Residues Asn-168, Asp-232, and 236–237 (SM) each bind L-ornithine. Carbamoyl phosphate-binding positions include 274-275 (CL) and Arg-321.

This sequence belongs to the aspartate/ornithine carbamoyltransferase superfamily. OTCase family.

Its subcellular location is the cytoplasm. It carries out the reaction carbamoyl phosphate + L-ornithine = L-citrulline + phosphate + H(+). It functions in the pathway amino-acid degradation; L-arginine degradation via ADI pathway; carbamoyl phosphate from L-arginine: step 2/2. Functionally, reversibly catalyzes the transfer of the carbamoyl group from carbamoyl phosphate (CP) to the N(epsilon) atom of ornithine (ORN) to produce L-citrulline. This chain is Ornithine carbamoyltransferase, catabolic (arcB), found in Avibacterium paragallinarum (Haemophilus gallinarum).